Reading from the N-terminus, the 306-residue chain is Immune protein Tsi7 (306 aa).

In terms of assembly, interacts with Tse7.

Functionally, immunity protein that plays a role in preventing early activation of toxin Tse7. Protects thereby cells from Tse7 DNase activity. This chain is Immune protein Tsi7, found in Pseudomonas aeruginosa (strain ATCC 15692 / DSM 22644 / CIP 104116 / JCM 14847 / LMG 12228 / 1C / PRS 101 / PAO1).